The sequence spans 93 residues: uncharacterized protein (93 aa).

Positions 1–22 (MNKYWLSGIIFLAYGLASPAFS) are cleaved as a signal peptide.

This is an uncharacterized protein from Escherichia coli (strain K12).